The following is an 87-amino-acid chain: Hemocyanin alpha chain (87 aa).

This sequence belongs to the tyrosinase family. Hemocyanin subfamily. As to quaternary structure, polymer that contains six different types of chains (alpha, beta, gamma, delta, epsilon, and zeta). Hemolymph.

The protein resides in the secreted. It localises to the extracellular space. In terms of biological role, hemocyanins are copper-containing oxygen carriers occurring freely dissolved in the hemolymph of many mollusks and arthropods. The sequence is that of Hemocyanin alpha chain from Tachypleus tridentatus (Japanese horseshoe crab).